Consider the following 244-residue polypeptide: MAQVPASGKLLVDPRYSTNDQEESILQDIITRFPNVVLMKQTAQLRAMMTIIRDKETPKEEFVFYADRLIRLLIEEALNELPFEKKEVTTPLDVSYHGVSFYSKICGVSIVRAGESMESGLRAVCRGCRIGKILIQRDETTAEPKLIYEKLPADIRDRWVMLLDPMCATAGSVCKAIEVLLRLGVKEERIIFVNILAAPQGIERVFKEYPKVRMVTAAVDICLNSRYYIVPGIGDFGDRYFGTM.

GTP contacts are provided by residues K59, R68, and 102 to 105 (YSKI). R112 provides a ligand contact to 5-phospho-alpha-D-ribose 1-diphosphate. R129 lines the GTP pocket. A 5-phospho-alpha-D-ribose 1-diphosphate-binding site is contributed by R137. R158 provides a ligand contact to GTP. Residues D164 and 164–172 (DPMCATAGS) each bind 5-phospho-alpha-D-ribose 1-diphosphate. Residues I229 and 234–236 (GDF) each bind uracil. D235 contacts 5-phospho-alpha-D-ribose 1-diphosphate.

The protein belongs to the UPRTase family. Monomer. Forms homodimers in presence of substrates and homotetramers in the presence of GTP. The cofactor is Mg(2+).

It carries out the reaction UMP + diphosphate = 5-phospho-alpha-D-ribose 1-diphosphate + uracil. The protein operates within pyrimidine metabolism; UMP biosynthesis via salvage pathway; UMP from uracil: step 1/1. With respect to regulation, allosterically activated by GTP. Binding of GTP leads to 5-time activation of the enzyme. Its function is as follows. Catalyzes the conversion of uracil and 5-phospho-alpha-D-ribose 1-diphosphate (PRPP) to UMP and diphosphate. This chain is Uracil phosphoribosyltransferase (uprt), found in Toxoplasma gondii.